A 284-amino-acid chain; its full sequence is D-tagatose-1,6-bisphosphate aldolase subunit GatY (284 aa).

D82 (proton donor) is an active-site residue. Zn(2+) contacts are provided by H83 and H180. G181 is a binding site for dihydroxyacetone phosphate. H208 contributes to the Zn(2+) binding site. Residues 209–211 and 230–233 each bind dihydroxyacetone phosphate; these read GAS and NVAT.

This sequence belongs to the class II fructose-bisphosphate aldolase family. TagBP aldolase GatY subfamily. As to quaternary structure, forms a complex with GatZ. Requires Zn(2+) as cofactor.

The enzyme catalyses D-tagatofuranose 1,6-bisphosphate = D-glyceraldehyde 3-phosphate + dihydroxyacetone phosphate. It functions in the pathway carbohydrate metabolism; D-tagatose 6-phosphate degradation; D-glyceraldehyde 3-phosphate and glycerone phosphate from D-tagatose 6-phosphate: step 2/2. Catalytic subunit of the tagatose-1,6-bisphosphate aldolase GatYZ, which catalyzes the reversible aldol condensation of dihydroxyacetone phosphate (DHAP or glycerone-phosphate) with glyceraldehyde 3-phosphate (G3P) to produce tagatose 1,6-bisphosphate (TBP). Requires GatZ subunit for full activity and stability. Is involved in the catabolism of galactitol. The sequence is that of D-tagatose-1,6-bisphosphate aldolase subunit GatY from Shigella sonnei (strain Ss046).